The following is a 107-amino-acid chain: Nucleoid-associated protein NE0434 (107 aa).

The protein belongs to the YbaB/EbfC family. As to quaternary structure, homodimer.

It is found in the cytoplasm. Its subcellular location is the nucleoid. Functionally, binds to DNA and alters its conformation. May be involved in regulation of gene expression, nucleoid organization and DNA protection. The sequence is that of Nucleoid-associated protein NE0434 from Nitrosomonas europaea (strain ATCC 19718 / CIP 103999 / KCTC 2705 / NBRC 14298).